Here is a 236-residue protein sequence, read N- to C-terminus: Sensory rhodopsin II (236 aa).

The next 7 helical transmembrane spans lie at 4 to 24 (ITTW…VLAY), 38 to 58 (LLLI…ALGF), 73 to 93 (YVDW…LAGA), 101 to 121 (LVVL…TPSP), 122 to 142 (VSYA…YLLY), 167 to 187 (FVVV…AGVG), and 196 to 216 (LVVV…ALLA). Lys-206 bears the N6-(retinylidene)lysine mark.

Belongs to the archaeal/bacterial/fungal opsin family. The covalent binding of retinal to the apoprotein, bacterioopsin, generates bacteriorhodopsin.

It localises to the membrane. Mediates the photorepellent response. This chain is Sensory rhodopsin II (sop2), found in Haloarcula marismortui (strain ATCC 43049 / DSM 3752 / JCM 8966 / VKM B-1809) (Halobacterium marismortui).